The primary structure comprises 382 residues: Lipid-A-disaccharide synthase (382 aa).

Belongs to the LpxB family.

It catalyses the reaction 2-N,3-O-bis[(3R)-3-hydroxytetradecanoyl]-alpha-D-glucosaminyl 1-phosphate + UDP-2-N,3-O-bis[(3R)-3-hydroxytetradecanoyl]-alpha-D-glucosamine = lipid A disaccharide (E. coli) + UDP + H(+). It carries out the reaction a lipid X + a UDP-2-N,3-O-bis[(3R)-3-hydroxyacyl]-alpha-D-glucosamine = a lipid A disaccharide + UDP + H(+). It functions in the pathway glycolipid biosynthesis; lipid IV(A) biosynthesis; lipid IV(A) from (3R)-3-hydroxytetradecanoyl-[acyl-carrier-protein] and UDP-N-acetyl-alpha-D-glucosamine: step 5/6. Its function is as follows. Condensation of UDP-2,3-diacylglucosamine and 2,3-diacylglucosamine-1-phosphate to form lipid A disaccharide, a precursor of lipid A, a phosphorylated glycolipid that anchors the lipopolysaccharide to the outer membrane of the cell. This is Lipid-A-disaccharide synthase from Escherichia coli O17:K52:H18 (strain UMN026 / ExPEC).